A 512-amino-acid chain; its full sequence is Retinaldehyde dehydrogenase 3 (512 aa).

The tract at residues 1 to 23 (MATANGAVENGQPDGKPPALPRP) is disordered. Alanine 2 is modified (N-acetylalanine). Residues lysine 204, glutamate 207, and 257–262 (GSTEVG) contribute to the NAD(+) site. The Proton acceptor role is filled by glutamate 280. Cysteine 314 serves as the catalytic Nucleophile. NAD(+) contacts are provided by glutamine 361 and glutamate 411.

This sequence belongs to the aldehyde dehydrogenase family. Homotetramer.

Its subcellular location is the cytoplasm. The catalysed reaction is all-trans-retinal + NAD(+) + H2O = all-trans-retinoate + NADH + 2 H(+). It carries out the reaction retinal + NAD(+) + H2O = retinoate + NADH + 2 H(+). The enzyme catalyses all-trans-13,14-dihydroretinal + NAD(+) + H2O = all-trans-13,14-dihydroretinoate + NADH + 2 H(+). It participates in cofactor metabolism; retinol metabolism. Its function is as follows. Catalyzes the NAD-dependent oxidation of aldehyde substrates, such as all-trans-retinal and all-trans-13,14-dihydroretinal, to their corresponding carboxylic acids, all-trans-retinoate and all-trans-13,14-dihydroretinoate, respectively. High specificity for all-trans-retinal as substrate, can also accept acetaldehyde as substrate in vitro but with lower affinity. Required for the biosynthesis of normal levels of retinoate in the embryonic ocular and nasal regions; a critical lipid in the embryonic development of the eye and the nasal region. This Rattus norvegicus (Rat) protein is Retinaldehyde dehydrogenase 3 (Aldh1a3).